We begin with the raw amino-acid sequence, 121 residues long: Non-structural protein 8 (121 aa).

Residues 1 to 15 (MKLLIVFGLLTSVYC) form the signal peptide. One can recognise an SARS ORF8 Ig-like domain in the interval 19–121 (ECSIQECCEN…HDVRVVLDFI (103 aa)). Disulfide bonds link C25-C90, C37-C102, and C61-C83.

This is Non-structural protein 8 from Rhinolophus macrotis (Big-eared horseshoe bat).